The chain runs to 566 residues: Oxygen-dependent choline dehydrogenase (566 aa).

7–36 (DYIICGAGSAGNVLATRLTEDPDVTVLLLE) is a binding site for FAD. The tract at residues 180–202 (NGYQQEGFGPMDRTVTPKGRRAS) is disordered. Residue histidine 474 is the Proton acceptor of the active site.

The protein belongs to the GMC oxidoreductase family. FAD serves as cofactor.

It catalyses the reaction choline + A = betaine aldehyde + AH2. It carries out the reaction betaine aldehyde + NAD(+) + H2O = glycine betaine + NADH + 2 H(+). Its pathway is amine and polyamine biosynthesis; betaine biosynthesis via choline pathway; betaine aldehyde from choline (cytochrome c reductase route): step 1/1. Its function is as follows. Involved in the biosynthesis of the osmoprotectant glycine betaine. Catalyzes the oxidation of choline to betaine aldehyde and betaine aldehyde to glycine betaine at the same rate. The polypeptide is Oxygen-dependent choline dehydrogenase (Burkholderia orbicola (strain MC0-3)).